Reading from the N-terminus, the 248-residue chain is ATP synthase delta chain, chloroplastic (248 aa).

The transit peptide at methionine 1–lysine 60 directs the protein to the chloroplast.

Belongs to the ATPase delta chain family. As to quaternary structure, F-type ATPases have 2 components, CF(1) - the catalytic core - and CF(0) - the membrane proton channel. CF(1) has five subunits: alpha(3), beta(3), gamma(1), delta(1), epsilon(1). CF(0) has three main subunits: a, b and c.

The protein resides in the plastid. It is found in the chloroplast thylakoid membrane. In terms of biological role, this protein seems to be part of the stalk that links CF(0) to CF(1). It either transmits conformational changes from CF(0) into CF(1) or is implicated in proton conduction. The protein is ATP synthase delta chain, chloroplastic (ATPD) of Nicotiana tabacum (Common tobacco).